Here is a 260-residue protein sequence, read N- to C-terminus: Transmembrane protein 106C (260 aa).

Gly2 carries the N-myristoyl glycine lipid modification. Residues 85–105 form a helical membrane-spanning segment; the sequence is YVLLSVLLCLLASGLVFFFLF. The N-linked (GlcNAc...) asparagine glycan is linked to Asn184. A helical membrane pass occupies residues 196 to 216; the sequence is SYVYFYCTLPAIRVHNIVIFM.

This sequence belongs to the TMEM106 family. As to quaternary structure, interacts with TMEM106B.

It localises to the endoplasmic reticulum membrane. Its subcellular location is the membrane. This chain is Transmembrane protein 106C (Tmem106c), found in Mus musculus (Mouse).